We begin with the raw amino-acid sequence, 457 residues long: Aromatic amino acid permease FywP (457 aa).

Transmembrane regions (helical) follow at residues 16–36, 43–63, 91–111, 114–134, 154–174, 205–225, 243–263, 292–312, 342–362, 373–393, 403–423, and 424–444; these read IVMLSLGGAIGSGLFLGSGKV, SVLLSYVLAGLTLYVVMYGVG, FADWVYWATWMAVLIAEEAGV, FLAILIPGVPLWVFALVVAVL, AFIKVAVILLLIALGIYLLVI, GFLTSLLVVIFSFGGSELAAI, GVLIRIISFYVIPIFLFLHLL, IVLVIIVIAIFSAVNSAIYAT, NAILVSSFVLFIGVLLSAVLG, ISFTISIVWILLLVAALVLYF, VKLATLVVLIALSLVFIMQII, and TNPWTLSVFALVICLLSYFSY.

The protein belongs to the amino acid-polyamine-organocation (APC) superfamily. Amino acid transporter (AAT) (TC 2.A.3.1) family.

It is found in the cell membrane. Its function is as follows. Involved in phenylalanine and tyrosine uptake. Also has affinity for tryptophan. Plays no significant role in the excretion of accumulated phenylalanine. This is Aromatic amino acid permease FywP from Lactococcus lactis subsp. cremoris (strain MG1363).